The primary structure comprises 648 residues: Cell surface glycoprotein MUC18 (648 aa).

The signal sequence occupies residues 1-23 (MGLPRLVCAFLFAACCCCRSATG). Ig-like V-type domains follow at residues 24–131 (VPGE…HYVQ) and 141–244 (PTIQ…KEVT). At 24-560 (VPGEEKQPTP…EKKLPQQESK (537 aa)) the chain is on the extracellular side. Disulfide bonds link Cys-50–Cys-118, Cys-163–Cys-225, Cys-274–Cys-322, Cys-367–Cys-409, and Cys-454–Cys-501. N-linked (GlcNAc...) asparagine glycosylation occurs at Asn-58. Ig-like C2-type domains follow at residues 246–332 (PVLY…TTVM), 337–426 (PLEL…RRVS), and 432–512 (SPWM…SNTT). The disordered stretch occupies residues 282–304 (PHFTINKKNPSTEEMEEESTDEN). A glycan (N-linked (GlcNAc...) asparagine) is linked at Asn-510. The segment covering 527 to 549 (DSSQTTGLSTPTVSPHSRANSTS) has biased composition (polar residues). The disordered stretch occupies residues 527–554 (DSSQTTGLSTPTVSPHSRANSTSTEKKL). Residues 561–581 (GVVIVAVIVCTLVLAVLGATL) form a helical membrane-spanning segment. Over 582-648 (YYFYKKGKLP…QGEKYIDLRH (67 aa)) the chain is Cytoplasmic. Phosphoserine occurs at positions 608 and 616. Residues 626–648 (LQGSNGDKRAPGDQGEKYIDLRH) are disordered. The span at 631 to 648 (GDKRAPGDQGEKYIDLRH) shows a compositional bias: basic and acidic residues.

As to expression, detected in lung, uterus and placenta (at protein level). Detected in heart, lung, kidney, adrenal gland, intestine, testis, skeletal muscle and aorta. Detected at low levels in adult brain, in particular in brain stem and spinal cord, but also in hippocampus, olfactory bulb and striatum (at protein level).

Its subcellular location is the cell membrane. It localises to the perikaryon. Plays a role in cell adhesion, and in cohesion of the endothelial monolayer at intercellular junctions in vascular tissue. Its expression may allow melanoma cells to interact with cellular elements of the vascular system, thereby enhancing hematogeneous tumor spread. Could be an adhesion molecule active in neural crest cells during embryonic development. Acts as a surface receptor that triggers tyrosine phosphorylation of FYN and PTK2/FAK1, and a transient increase in the intracellular calcium concentration. In Rattus norvegicus (Rat), this protein is Cell surface glycoprotein MUC18 (Mcam).